The sequence spans 173 residues: dCTP deaminase, dUMP-forming (173 aa).

Residues 93 to 98 (RSSTGR), D111, 119 to 121 (TLE), Q138, and Y151 contribute to the dCTP site. The active-site Proton donor/acceptor is E121.

This sequence belongs to the dCTP deaminase family. In terms of assembly, homotrimer.

The enzyme catalyses dCTP + 2 H2O = dUMP + NH4(+) + diphosphate. It functions in the pathway pyrimidine metabolism; dUMP biosynthesis; dUMP from dCTP: step 1/1. In terms of biological role, bifunctional enzyme that catalyzes both the deamination of dCTP to dUTP and the hydrolysis of dUTP to dUMP without releasing the toxic dUTP intermediate. The chain is dCTP deaminase, dUMP-forming from Clostridium botulinum (strain Alaska E43 / Type E3).